The sequence spans 470 residues: Cysteine--tRNA ligase (470 aa).

Position 28 (Cys28) interacts with Zn(2+). The short motif at 30-40 (PTVYNYIHIGN) is the 'HIGH' region element. Zn(2+)-binding residues include Cys212, His237, and Glu241. A 'KMSKS' region motif is present at residues 271–275 (KMSKS). Lys274 contributes to the ATP binding site.

It belongs to the class-I aminoacyl-tRNA synthetase family. In terms of assembly, monomer. Requires Zn(2+) as cofactor.

The protein resides in the cytoplasm. The enzyme catalyses tRNA(Cys) + L-cysteine + ATP = L-cysteinyl-tRNA(Cys) + AMP + diphosphate. This is Cysteine--tRNA ligase from Pediococcus pentosaceus (strain ATCC 25745 / CCUG 21536 / LMG 10740 / 183-1w).